The chain runs to 331 residues: Phosphate acyltransferase (331 aa).

It belongs to the PlsX family. Homodimer. Probably interacts with PlsY.

The protein resides in the cytoplasm. The catalysed reaction is a fatty acyl-[ACP] + phosphate = an acyl phosphate + holo-[ACP]. It functions in the pathway lipid metabolism; phospholipid metabolism. Its function is as follows. Catalyzes the reversible formation of acyl-phosphate (acyl-PO(4)) from acyl-[acyl-carrier-protein] (acyl-ACP). This enzyme utilizes acyl-ACP as fatty acyl donor, but not acyl-CoA. This Exiguobacterium sibiricum (strain DSM 17290 / CCUG 55495 / CIP 109462 / JCM 13490 / 255-15) protein is Phosphate acyltransferase.